The sequence spans 574 residues: Amino-acid acetyltransferase, mitochondrial (574 aa).

A mitochondrion-targeting transit peptide spans 1–13 (MWRRIFAHGLKYD). The N-acetyltransferase domain occupies 392–560 (KGAKPSNNSP…KRLREFMRSV (169 aa)).

This sequence belongs to the acetyltransferase family. Interacts with the acetylglutamate kinase chain of AGR5,6.

The protein resides in the mitochondrion. The enzyme catalyses L-glutamate + acetyl-CoA = N-acetyl-L-glutamate + CoA + H(+). Its pathway is amino-acid biosynthesis; L-arginine biosynthesis; N(2)-acetyl-L-ornithine from L-glutamate: step 1/4. Its activity is regulated as follows. Feedback inhibition by L-arginine. Its function is as follows. N-acetylglutamate synthase involved in arginine biosynthesis. In Saccharomyces cerevisiae (strain YJM789) (Baker's yeast), this protein is Amino-acid acetyltransferase, mitochondrial (ARG2).